The chain runs to 1425 residues: Zinc finger FYVE domain-containing protein 9 (1425 aa).

Disordered stretches follow at residues 201–255 (ESTE…IGRD) and 291–352 (EDLT…SGRN). Basic and acidic residues predominate over residues 202-225 (STEKDMNSEKQMDPLNRPKTEGRS). 2 stretches are compositionally biased toward polar residues: residues 230–245 (CPTS…SPSQ) and 296–312 (KISS…SFSH). Phosphoserine is present on residues Ser-306 and Ser-668. The segment at 699-758 (DSQAPNCMKCEARFTFTKRRHHCRACGKVFCASCCSLKCKLLYMDRKEARVCVICHSVLM) adopts an FYVE-type zinc-finger fold. Cys-705, Cys-708, Cys-721, Cys-724, Cys-729, Cys-732, Cys-750, and Cys-753 together coordinate Zn(2+). The tract at residues 767–823 (MSASSQSPNPNNPAEYCSTIPPLQQAQASGALSSPPPTVMVPVGVLKHPGAEVAQPR) is SBD.

Interacts (via the SBD region) with SMAD2; the interaction recruits SMAD2 to the TGF-beta receptor and is disrupted by phosphorylation of SMAD2 upon TGF-beta receptor activation. Interacts with SMAD3. Interacts with TGFBR1 and TGFBR2; the interaction recruits SMAD2 to the TGF-beta receptor. Interacts with PML. Ubiquitous. In the brain found primarily in the cerebrovascular smooth muscle cells and reactive astrocytes.

It localises to the cytoplasm. It is found in the early endosome membrane. In terms of biological role, early endosomal protein that functions to recruit SMAD2/SMAD3 to intracellular membranes and to the TGF-beta receptor. Plays a significant role in TGF-mediated signaling by regulating the subcellular location of SMAD2 and SMAD3 and modulating the transcriptional activity of the SMAD3/SMAD4 complex. Possibly associated with TGF-beta receptor internalization. This Homo sapiens (Human) protein is Zinc finger FYVE domain-containing protein 9 (ZFYVE9).